Here is a 296-residue protein sequence, read N- to C-terminus: Enoyl-CoA hydratase AKT3-2 (296 aa).

A Peroxisomal targeting signal type 1 motif is present at residues 294–296 (PKL).

Belongs to the enoyl-CoA hydratase/isomerase family.

The protein resides in the peroxisome. It carries out the reaction a (3S)-3-hydroxyacyl-CoA = a (2E)-enoyl-CoA + H2O. The catalysed reaction is a 4-saturated-(3S)-3-hydroxyacyl-CoA = a (3E)-enoyl-CoA + H2O. The protein operates within mycotoxin biosynthesis. Functionally, enoyl-CoA hydratase; part of the gene clusters that mediate the biosynthesis of the host-selective toxins (HSTs) AK-toxins responsible for Japanese pear black spot disease by the Japanese pear pathotype. AK-toxins are esters of 9,10-epoxy 8-hydroxy 9-methyldecatrienoic acid (EDA). On cellular level, AK-toxins affect plasma membrane of susceptible cells and cause a sudden increase in loss of K(+) after a few minutes of toxin treatment. The acyl-CoA ligase AKT1, the hydrolase AKT2 and enoyl-CoA hydratase AKT3 are all involved in the biosynthesis of the AK-, AF- and ACT-toxin common 9,10-epoxy-8-hydroxy-9-methyl-decatrienoic acid (EDA) structural moiety. Part of the EDA biosynthesis occurs in the peroxisome since these 3 enzymes are localized in peroxisomes. The exact roles of the 3 enzymes, as well as of additional AK-toxin clusters enzymes, including AKT4, AKT6 and AKTS1, have still to be elucidated. The Cytochrome P450 monooxygenase AKT7 on the other side functions to limit production of EDA and AK-toxin, probably via the catalysis of a side reaction of EDA or its precursor. The chain is Enoyl-CoA hydratase AKT3-2 from Alternaria alternata (Alternaria rot fungus).